Here is an 811-residue protein sequence, read N- to C-terminus: Potassium transporter 7 (811 aa).

At 1 to 52 (MPSYQYLLSLLFYILDCTDRFSVIVTIHNHRVGVLMIVLLQDQWKSYCRTIS) the chain is on the cytoplasmic side. A helical membrane pass occupies residues 53 to 73 (LLAFQSFGVVYGDLSTSPLYV). Topologically, residues 74–93 (YKSAFSGRLNNYRDETTIFG) are extracellular. Residues 94–114 (LFSLIFWTLTLLPLLKYVIIV) form a helical membrane-spanning segment. Residues 115–181 (LNADDNGEGG…EKHRKLRTCL (67 aa)) lie on the Cytoplasmic side of the membrane. A helical transmembrane segment spans residues 182–202 (LLFVLFGACMVIGDGVFTPAI). Topologically, residues 203–217 (SVLSAISGLKDPGPG) are extracellular. Residues 218–238 (GIPDGWVVFIACIVLVGLFAL) traverse the membrane as a helical segment. The Cytoplasmic portion of the chain corresponds to 239-245 (QHRGTHR). Residues 246 to 266 (VAFMFAPIVVVWLLSIGVIGL) traverse the membrane as a helical segment. The Extracellular portion of the chain corresponds to 267-296 (YNIIHWNHRIFLALSPHYVIKFFKMTGKDG). The chain crosses the membrane as a helical span at residues 297-317 (WLSLGGVLLAITGTEAMFADL). Residues 318-326 (GHFTAASIR) lie on the Cytoplasmic side of the membrane. Residues 327–347 (LAFVGAIYPCLVLQYMGQAAF) traverse the membrane as a helical segment. The Extracellular portion of the chain corresponds to 348 to 366 (LSRNMSAVEDSFYQSVPRS). A glycan (N-linked (GlcNAc...) asparagine) is linked at N351. A helical transmembrane segment spans residues 367–387 (LFWPVFVIATLAAVVGSQSII). At 388 to 418 (SATFSIVKQCLSLGCFPRVKVVHTSRWIHGQ) the chain is on the cytoplasmic side. Residues 419–439 (IYIPEINWILMVLCLAVTLGF) form a helical membrane-spanning segment. Over 440 to 450 (RDTTVIGNAYG) the chain is Extracellular. The helical transmembrane segment at 451 to 471 (LACIVVMFVTTWLMALVIIFV) threads the bilayer. Residues 472 to 475 (WQKN) are Cytoplasmic-facing. Residues 476-496 (ILLALLFVVAFGSIEVVYLSA) form a helical membrane-spanning segment. At 497–503 (AVTKVPQ) the chain is on the extracellular side. A helical membrane pass occupies residues 504–524 (GGWAPIVFAFVFMLVMYVWHY). At 525-811 (GSRRKYLFDL…LVEVGMIYYV (287 aa)) the chain is on the cytoplasmic side. Positions 680-702 (TGLVMRDSNNEASGTSLTRSSRS) are disordered.

Belongs to the HAK/KUP transporter (TC 2.A.72.3) family. Expressed in roots and shoots.

The protein localises to the membrane. Functionally, high-affinity potassium transporter. This chain is Potassium transporter 7 (HAK7), found in Oryza sativa subsp. japonica (Rice).